A 495-amino-acid polypeptide reads, in one-letter code: Fusicoccadiene 8-ol C-16 hydroxylase (495 aa).

The helical transmembrane segment at 12–32 (VLLALIVWIGTTIIYNIYFHP) threads the bilayer. N-linked (GlcNAc...) asparagine glycosylation is found at Asn-249 and Asn-317. A heme-binding site is contributed by Cys-439.

This sequence belongs to the cytochrome P450 family. Requires heme as cofactor.

The protein localises to the membrane. It functions in the pathway mycotoxin biosynthesis. Cytochrome P450 monooxygenase; part of the gene cluster that mediates the biosynthesis of the diterpene glucoside brassicicene C. In the first step of the brassicicene C biosynthesis, the bifunctional diterpene synthase bsc8 that possesses both prenyl transferase and terpene cyclase activity, converts isopentenyl diphosphate and dimethylallyl diphosphate into geranylgeranyl diphosphate (GGDP) that is further converted into fusicocca-2,10(14)-diene, the first precursor for brassicicene C. Fusicocca-2,10(14)-diene is then substrate of cytochrome P450 monooxygenase bsc1 for hydroxylation at the C-8 position. Oxidation at C-16 position to aldehyde is then catalyzed by the cytochrome P450 monooyxygenase bsc7, yielding fusicocca-2,10(14)-diene-8-beta,16-diol. Follows the isomerization of the double bond and reduction of aldehyde to alcohol catalyzed by the short-chain dehydrogenase/reductase bsc3 to yield the diol compound fusicocca-1,10(14)-diene-8 beta,16-diol. The next step is the oxidation at the C-3 position of fusicocca-2,10(14)-diene-8-beta,16-diol catalyzed by the alpha-ketoglutarate dependent dioxygenase bsc9, to produce a triol compound. Methylation of the hydroxy group at position 16 is performed by the methyltransferase bsc6. 16-O-methylation is followed by oxidation at the C-13 position to ketone and an alkyl shift of the methyl group leads to brassicicene C. Although the probable acetyltransferase bsc4 is included in the gene cluster, no acetylation reactions are necessary for brassicicene C biosynthesis. However, the fact that brassicicene E, which is a structurally related compound having an acetoxy group at position 12, was previously isolated from another strain of A.brassicicola suggests that the ATCC 96836 strain might also produce a small amount of brassicicene E. This is Fusicoccadiene 8-ol C-16 hydroxylase from Alternaria brassicicola (Dark leaf spot agent).